A 619-amino-acid chain; its full sequence is MFYHLIAPLKNKTPPLTYFSKEQHQKGALVNIPLRNKTLLGVVLEEVSKPSFECLELEKTPYFLLPFQMELAIFIAQYYSANLSSVLSLFAPFKECDLVGLEKIEPILNILSQTQTNALKELQKHSASLLFGDTGSGKTEIYMHAIAQTLEQKKSALLLVPEIALTPQMQQRLKRVFKENLGLWHSKLSQNQKKQFLEKLYSQEIKLVVGTRSALFLPLKELGLIIVDEEHDFSYKSHQSPMYNARDLCLYLSHKFPIQVILGSATPSLNSYKRFKDKALVRLKGRYTPTQKNIIFEKTERFITPKLLEALQQVLDKNEQAIIFVPTRANFKTLLCQSCYKSVQCPFCSVNMSLHLKTNKLMCHYCHFSSPIPKICSACQSEVLVGKRIGTMQVLKELESLLEGAKIAILDKDHTSTQKKLHNILNDFNAQKTNILIGTQMISKGHDYAKVSLAVVLGIDNIIKSNSYRALEEGVSLLYQIAGRSARQISGQVFIQSTETDLLENFLEDYEDFLQYELQERCELYPPFSRLCLLEFKHKNEEKAQQLSLKASQTLSSCLEKGVTLSNFKAPIEKIASSYRYLILLRSKNPLSLIKSVHAFLKSAPSIPCSVNMDPVDIF.

The region spanning 119-285 is the Helicase ATP-binding domain; it reads LKELQKHSAS…KDKALVRLKG (167 aa). 132–139 contributes to the ATP binding site; sequence GDTGSGKT. The DEAH box motif lies at 228-231; it reads DEEH. Residues Cys336, Cys339, Cys345, Cys348, Cys363, Cys366, Cys376, and Cys379 each contribute to the Zn(2+) site. The 162-residue stretch at 371–532 folds into the Helicase C-terminal domain; sequence PIPKICSACQ…ELYPPFSRLC (162 aa).

The protein belongs to the helicase family. PriA subfamily. As to quaternary structure, component of the replication restart primosome. It depends on Zn(2+) as a cofactor.

It carries out the reaction Couples ATP hydrolysis with the unwinding of duplex DNA by translocating in the 3'-5' direction.. The enzyme catalyses ATP + H2O = ADP + phosphate + H(+). In terms of biological role, initiates the restart of stalled replication forks, which reloads the replicative helicase on sites other than the origin of replication. Recognizes and binds to abandoned replication forks and remodels them to uncover a helicase loading site. Promotes assembly of the primosome at these replication forks. Functionally, important for survival of the bacteria in host cells. This chain is Replication restart protein PriA, found in Helicobacter pylori (strain ATCC 700392 / 26695) (Campylobacter pylori).